A 459-amino-acid chain; its full sequence is Putrescine aminotransferase (459 aa).

Pyridoxal 5'-phosphate-binding positions include 150-151 (GT) and Q274. Position 300 is an N6-(pyridoxal phosphate)lysine (K300). Residue T332 participates in pyridoxal 5'-phosphate binding.

The protein belongs to the class-III pyridoxal-phosphate-dependent aminotransferase family. Putrescine aminotransferase subfamily. Pyridoxal 5'-phosphate serves as cofactor.

The catalysed reaction is an alkane-alpha,omega-diamine + 2-oxoglutarate = an omega-aminoaldehyde + L-glutamate. It catalyses the reaction putrescine + 2-oxoglutarate = 1-pyrroline + L-glutamate + H2O. The enzyme catalyses cadaverine + 2-oxoglutarate = 5-aminopentanal + L-glutamate. Its pathway is amine and polyamine degradation; putrescine degradation; 4-aminobutanal from putrescine (transaminase route): step 1/1. Its function is as follows. Catalyzes the aminotransferase reaction from putrescine to 2-oxoglutarate, leading to glutamate and 4-aminobutanal, which spontaneously cyclizes to form 1-pyrroline. This is the first step in one of two pathways for putrescine degradation, where putrescine is converted into 4-aminobutanoate (gamma-aminobutyrate or GABA) via 4-aminobutanal. Also functions as a cadaverine transaminase in a a L-lysine degradation pathway to succinate that proceeds via cadaverine, glutarate and L-2-hydroxyglutarate. This is Putrescine aminotransferase from Escherichia coli O9:H4 (strain HS).